We begin with the raw amino-acid sequence, 631 residues long: MTIRSLPALSPLALSVRVLLMAGSLALGNVATAASTPAAPAGKNVTWEDIANDHLTTQDVLQYGMGTNAQRWSPLAQVNDKNVFKLTPAWSYSFGDEKQRGQESQAIVSDGVVYVTGSYSRVFALDAKTGKRLWTYNHRLPDNIRPCCDVVNRGAAIYGDKIYFGTLDARVIALDKRTGKVVWNKKFGDHSAGYTMTGAPVLIKDKTSGKVLLIHGSSGDEFGVVGQLFARDPDTGEEVWMRPFVEGHMGRLNGKDSTPTGDVKAPSWPDDPTTETGKVEAWSHGGGAPWQSASFDPETNTIIVGAGNPGPWNTWARTSKDGNPHDFDSLYTSGQVGVDPSTGEVKWFYQHTPNDAWDFSGNNELVLFDYKDKNGNVVKATAHADRNGFFYVVDRNNGKLQNAFPFVDNITWASHIDLKTGRPVENPGQRPAKPLPGETKGKPVEVSPPFLGGKNWNPMAYSQDTGLFYIPGNQWKEEYWTEEVNYKKGSAYLGMGFRIKRMYDDHVGTLRAMDPTTGKLVWEHKEHLPLWAGVLATKGNLVFTGTGDGFFKAFDAKTGKELWKFQTGSGIVSPPITWEQDGEQYIGVTVGYGGAVPLWGGDMAELTKPVAQGGSFWVFKIPSWDNKTAQR.

The first 33 residues, 1–33 (MTIRSLPALSPLALSVRVLLMAGSLALGNVATA), serve as a signal peptide directing secretion. Ca(2+)-binding residues include Asp-53, Thr-56, and Asp-59. Position 103 (Glu-103) interacts with pyrroloquinoline quinone. Cysteines 147 and 148 form a disulfide. Pyrroloquinoline quinone-binding positions include Arg-153, Thr-197, and 215–217 (HGS). Glu-221 is a Ca(2+) binding site. The disordered stretch occupies residues 250–286 (GRLNGKDSTPTGDVKAPSWPDDPTTETGKVEAWSHGG). Ca(2+) is bound by residues Asn-308 and Asp-358. Asp-358 serves as the catalytic Proton acceptor. Arg-386 is a pyrroloquinoline quinone binding site. The segment at 421–443 (GRPVENPGQRPAKPLPGETKGKP) is disordered. Positions 531 and 595 each coordinate pyrroloquinoline quinone.

This sequence belongs to the bacterial PQQ dehydrogenase family. Homodimer. Interacts with cytochrome c550. Requires pyrroloquinoline quinone as cofactor. Ca(2+) is required as a cofactor. Post-translationally, the disulfide ring formed between the two adjacent cysteine residues Cys-147 and Cys-148 is essential for efficient electron transfer at pH 7 from PedE to its natural electron acceptor cytochrome c550.

The protein localises to the periplasm. The catalysed reaction is a primary alcohol + 2 Fe(III)-[cytochrome c] = an aldehyde + 2 Fe(II)-[cytochrome c] + 2 H(+). It catalyses the reaction ethanol + 2 Fe(III)-[cytochrome c] = acetaldehyde + 2 Fe(II)-[cytochrome c] + 2 H(+). It carries out the reaction butan-1-ol + 2 Fe(III)-[cytochrome c] = butanal + 2 Fe(II)-[cytochrome c] + 2 H(+). The enzyme catalyses butan-2-ol + 2 Fe(III)-[cytochrome c] = butan-2-one + 2 Fe(II)-[cytochrome c] + 2 H(+). The catalysed reaction is 2-phenylethanol + 2 Fe(III)-[cytochrome c] = 2-phenylacetaldehyde + 2 Fe(II)-[cytochrome c] + 2 H(+). It catalyses the reaction octan-1-ol + 2 Fe(III)-[cytochrome c] = octanal + 2 Fe(II)-[cytochrome c] + 2 H(+). It carries out the reaction hexan-1-ol + 2 Fe(III)-[cytochrome c] = hexanal + 2 Fe(II)-[cytochrome c] + 2 H(+). The enzyme catalyses cinnamyl alcohol + 2 Fe(III)-[cytochrome c] = cinnamaldehyde + 2 Fe(II)-[cytochrome c] + 2 H(+). The catalysed reaction is farnesol + 2 Fe(III)-[cytochrome c] = farnesal + 2 Fe(II)-[cytochrome c] + 2 H(+). It catalyses the reaction an aldehyde + 2 Fe(III)-[cytochrome c] + H2O = a carboxylate + 2 Fe(II)-[cytochrome c] + 3 H(+). It carries out the reaction acetaldehyde + 2 Fe(III)-[cytochrome c] + H2O = 2 Fe(II)-[cytochrome c] + acetate + 3 H(+). The enzyme catalyses butanal + 2 Fe(III)-[cytochrome c] + H2O = butanoate + 2 Fe(II)-[cytochrome c] + 3 H(+). The catalysed reaction is hexanal + 2 Fe(III)-[cytochrome c] + H2O = hexanoate + 2 Fe(II)-[cytochrome c] + 3 H(+). It catalyses the reaction octanal + 2 Fe(III)-[cytochrome c] + H2O = octanoate + 2 Fe(II)-[cytochrome c] + 3 H(+). Its function is as follows. Alcohol dehydrogenase that catalyzes the oxidation of a range of substrates, including linear and aromatic primary and secondary alcohols, as well as aldehydes, allowing bacterial growth with a variety of volatile organic compounds (VOCs) as carbon and energy sources. Uses a specific inducible cytochrome c550, encoded by the adjacent gene in the locus, as electron acceptor. The chain is Quinoprotein alcohol dehydrogenase PedE from Pseudomonas putida (strain ATCC 47054 / DSM 6125 / CFBP 8728 / NCIMB 11950 / KT2440).